The primary structure comprises 518 residues: Glycerophosphoinositol transporter 1 (518 aa).

The Cytoplasmic segment spans residues 1–44; it reads MEDKDITSVNEKEVNENTNPRIIKYDAERRATRTETSKKDKWKN. Residues 45–65 form a helical membrane-spanning segment; the sequence is IVTIIASGFALISDGYVNGSM. The Extracellular segment spans residues 66-91; sequence SMLNKVFVMEYGKKNYSSKVSTRVSN. Asn-80 carries N-linked (GlcNAc...) asparagine glycosylation. The helical transmembrane segment at 92–112 threads the bilayer; that stretch reads AALVGIIFGQFFMGIAADYYS. The Cytoplasmic portion of the chain corresponds to 113-114; it reads RK. Residues 115–136 traverse the membrane as a helical segment; it reads SCILVATAILVIGSALCAASHG. The Extracellular segment spans residues 137–138; it reads TT. A helical transmembrane segment spans residues 139 to 159; that stretch reads VPGMFWMLTVMRGLVGIGVGA. The Cytoplasmic segment spans residues 160-184; it reads EYPTSTLSANESANEYTTTKRGGIL. The helical transmembrane segment at 185-205 threads the bilayer; that stretch reads VMVTNLPLAFGGPFATIIFLI. Over 206–216 the chain is Extracellular; it reads VYKICSGTKHL. The chain crosses the membrane as a helical span at residues 217-237; the sequence is EAIWRTVFAIGCFWPLSVFYF. Residues 238–268 are Cytoplasmic-facing; the sequence is RWKTATTEVYEKGRIKRNIPYFLALKFYWKR. The chain crosses the membrane as a helical span at residues 269 to 289; that stretch reads LLGTCGTWFMYDFVTFPNGIF. At 290–306 the chain is on the extracellular side; sequence SSTIISSVIKDQNDLVK. The helical transmembrane segment at 307-327 threads the bilayer; the sequence is VAEWNLLLGVLAVLGVPIGAY. Over 328–335 the chain is Cytoplasmic; that stretch reads LSDRIGRK. The chain crosses the membrane as a helical span at residues 336-356; it reads YTLMFGFSGYIIFGLIIGCAY. The Extracellular portion of the chain corresponds to 357 to 360; that stretch reads DQLK. The helical transmembrane segment at 361-381 threads the bilayer; that stretch reads KITPLFIIFYAFMNMLGNAGP. Residues 382–399 lie on the Cytoplasmic side of the membrane; sequence GDMLGVISSEASATAVRG. A helical transmembrane segment spans residues 400–420; it reads VFYGLSAVTGKIGSVVGVECF. The Extracellular portion of the chain corresponds to 421-430; the sequence is QPIRDNLGAR. The chain crosses the membrane as a helical span at residues 431-451; sequence WTFIIAAICGLIGIIITYFFV. Residues 452–518 are Cytoplasmic-facing; that stretch reads PHSLESDLMK…IISVRQVDQS (67 aa).

This sequence belongs to the major facilitator superfamily. Sugar transporter (TC 2.A.1.1) family.

It localises to the cell membrane. The enzyme catalyses sn-glycerol 3-phosphocholine(out) = sn-glycerol 3-phosphocholine(in). It catalyses the reaction sn-glycero-3-phospho-1D-myo-inositol(out) = sn-glycero-3-phospho-1D-myo-inositol(in). Functionally, glycerophosphodiester transporter that mediates uptake of both glycerophosphoinositol (GroPIns) and glycerophosphocholine (GroPCho) as sources of the nutrients inositol and phosphate. This Saccharomyces cerevisiae (strain ATCC 204508 / S288c) (Baker's yeast) protein is Glycerophosphoinositol transporter 1.